A 399-amino-acid polypeptide reads, in one-letter code: Stomatin-like protein 1 (399 aa).

A Tyrosine-type lysosomal sorting signal motif is present at residues 6–10 (GYRAL). Position 28 is a phosphoserine (serine 28). Residues 58–78 (LVSVLGFLLLLLTFPISGWFA) traverse the membrane as a helical; Signal-anchor for type III membrane protein segment. Topologically, residues 79 to 399 (LKIVPTYERM…KLEAVLKALK (321 aa)) are cytoplasmic. The SCP2 domain occupies 288–399 (KQPVAEGLLT…KLEAVLKALK (112 aa)).

Belongs to the band 7/mec-2 family. Interacts with STOM; may redistribute STOM from the plasma membrane to late endosomes. As to expression, expressed in dorsal root ganglion neurons.

The protein localises to the membrane. Its subcellular location is the cytoplasmic vesicle. It localises to the cell membrane. It is found in the late endosome membrane. The protein resides in the membrane raft. Functionally, may play a role in cholesterol transfer to late endosomes. May play a role in modulating membrane acid-sensing ion channels. Can specifically inhibit proton-gated current of ASIC1 isoform 1. Can increase inactivation speed of ASIC3. May be involved in regulation of proton sensing in dorsal root ganglions. The chain is Stomatin-like protein 1 (Stoml1) from Mus musculus (Mouse).